The sequence spans 280 residues: Putative pyruvate, phosphate dikinase regulatory protein (280 aa).

Position 152–159 (152–159) interacts with ADP; that stretch reads GISRTSKT.

Belongs to the pyruvate, phosphate/water dikinase regulatory protein family. PDRP subfamily.

The enzyme catalyses N(tele)-phospho-L-histidyl/L-threonyl-[pyruvate, phosphate dikinase] + ADP = N(tele)-phospho-L-histidyl/O-phospho-L-threonyl-[pyruvate, phosphate dikinase] + AMP + H(+). It catalyses the reaction N(tele)-phospho-L-histidyl/O-phospho-L-threonyl-[pyruvate, phosphate dikinase] + phosphate + H(+) = N(tele)-phospho-L-histidyl/L-threonyl-[pyruvate, phosphate dikinase] + diphosphate. In terms of biological role, bifunctional serine/threonine kinase and phosphorylase involved in the regulation of the pyruvate, phosphate dikinase (PPDK) by catalyzing its phosphorylation/dephosphorylation. The polypeptide is Putative pyruvate, phosphate dikinase regulatory protein (Clostridioides difficile (strain 630) (Peptoclostridium difficile)).